A 179-amino-acid polypeptide reads, in one-letter code: ATP synthase subunit b (179 aa).

Residues 29-48 (VINLAILIGVLVYFGRGVLG) form a helical membrane-spanning segment.

The protein belongs to the ATPase B chain family. F-type ATPases have 2 components, F(1) - the catalytic core - and F(0) - the membrane proton channel. F(1) has five subunits: alpha(3), beta(3), gamma(1), delta(1), epsilon(1). F(0) has four main subunits: a(1), b(1), b'(1) and c(10-14). The alpha and beta chains form an alternating ring which encloses part of the gamma chain. F(1) is attached to F(0) by a central stalk formed by the gamma and epsilon chains, while a peripheral stalk is formed by the delta, b and b' chains.

Its subcellular location is the cellular thylakoid membrane. Functionally, f(1)F(0) ATP synthase produces ATP from ADP in the presence of a proton or sodium gradient. F-type ATPases consist of two structural domains, F(1) containing the extramembraneous catalytic core and F(0) containing the membrane proton channel, linked together by a central stalk and a peripheral stalk. During catalysis, ATP synthesis in the catalytic domain of F(1) is coupled via a rotary mechanism of the central stalk subunits to proton translocation. Component of the F(0) channel, it forms part of the peripheral stalk, linking F(1) to F(0). In terms of biological role, the complex from the organism is particularly stable to disruption and remains functional after 6 hrs at 55 degrees Celsius. This Thermosynechococcus vestitus (strain NIES-2133 / IAM M-273 / BP-1) protein is ATP synthase subunit b.